The chain runs to 154 residues: MGLSDGEWQLVLNVWGKVEADLAGHGQDILIRLFKGHPETLEKFDKFKHLKTEADMKASEDLKKHGNTVLTALGAILKKKGHHDAELKPLAQSHATKHKIPIKYLEFISEAIIHVLHSRHPAEFGADAQGAMNKALELFRKDIAAKYKELGFHG.

Positions 2–148 (GLSDGEWQLV…FRKDIAAKYK (147 aa)) constitute a Globin domain. Ser-4 bears the Phosphoserine mark. His-65 contacts nitrite. His-65 contacts O2. Thr-68 is subject to Phosphothreonine. Residue His-94 coordinates heme b.

The protein belongs to the globin family. Monomeric.

The protein resides in the cytoplasm. Its subcellular location is the sarcoplasm. The catalysed reaction is Fe(III)-heme b-[protein] + nitric oxide + H2O = Fe(II)-heme b-[protein] + nitrite + 2 H(+). It catalyses the reaction H2O2 + AH2 = A + 2 H2O. In terms of biological role, monomeric heme protein which primary function is to store oxygen and facilitate its diffusion within muscle tissues. Reversibly binds oxygen through a pentacoordinated heme iron and enables its timely and efficient release as needed during periods of heightened demand. Depending on the oxidative conditions of tissues and cells, and in addition to its ability to bind oxygen, it also has a nitrite reductase activity whereby it regulates the production of bioactive nitric oxide. Under stress conditions, like hypoxia and anoxia, it also protects cells against reactive oxygen species thanks to its pseudoperoxidase activity. In Orcinus orca (Killer whale), this protein is Myoglobin (MB).